The primary structure comprises 85 residues: Beta-insect depressant toxin Lqh-dprIT3b (85 aa).

Positions 1 to 21 (MKLLLLLTISASMLIEGLVNA) are cleaved as a signal peptide. Positions 22 to 82 (DGYIRGGDGC…EWDYETNTCG (61 aa)) constitute an LCN-type CS-alpha/beta domain. Cystine bridges form between C31/C81, C35/C56, C42/C63, and C46/C65. G82 carries the glycine amide modification.

Belongs to the long (4 C-C) scorpion toxin superfamily. Sodium channel inhibitor family. Beta subfamily. As to expression, expressed by the venom gland.

The protein resides in the secreted. Functionally, depressant insect beta-toxins cause a transient contraction paralysis followed by a slow flaccid paralysis. They bind voltage-independently at site-4 of sodium channels (Nav) and block action potentials, primarily by depolarizing the axonal membrane and suppressing the sodium current. This depressant toxin is active only on insects. It is found in a relatively small amount in the venom, and its activity on insects is 10-fold higher compared to other known depressant toxins. In Leiurus hebraeus (Hebrew deathstalker scorpion), this protein is Beta-insect depressant toxin Lqh-dprIT3b.